The sequence spans 370 residues: DNA replication and repair protein RecF (370 aa).

Residue 30-37 coordinates ATP; that stretch reads GENAQGKT.

This sequence belongs to the RecF family.

It localises to the cytoplasm. Functionally, the RecF protein is involved in DNA metabolism; it is required for DNA replication and normal SOS inducibility. RecF binds preferentially to single-stranded, linear DNA. It also seems to bind ATP. The chain is DNA replication and repair protein RecF from Staphylococcus aureus (strain bovine RF122 / ET3-1).